The chain runs to 228 residues: Urease accessory protein UreF (228 aa).

This sequence belongs to the UreF family. In terms of assembly, ureD, UreF and UreG form a complex that acts as a GTP-hydrolysis-dependent molecular chaperone, activating the urease apoprotein by helping to assemble the nickel containing metallocenter of UreC. The UreE protein probably delivers the nickel.

Its subcellular location is the cytoplasm. Its function is as follows. Required for maturation of urease via the functional incorporation of the urease nickel metallocenter. The protein is Urease accessory protein UreF of Yersinia pseudotuberculosis serotype IB (strain PB1/+).